The primary structure comprises 194 residues: MQLEATPRGTGSRASRRLRQAGFVPGIIYGPGVEPLAVSVRSTQLERLVERQGRGHLIHVQVEGEANPRQVVIKQLQRDILTQQVTHVDFLQVDMNRTITLTVPIVVVGEEQARRRGLLITHELDEVEVECRPTEIPEAVTLDVSGLTEPGPVTAASLSAPPGVRVLEDPDTVVVSCTVIGGGEEEEASTGPAA.

This sequence belongs to the bacterial ribosomal protein bL25 family. CTC subfamily. Part of the 50S ribosomal subunit; part of the 5S rRNA/L5/L18/L25 subcomplex. Contacts the 5S rRNA. Binds to the 5S rRNA independently of L5 and L18.

Functionally, this is one of the proteins that binds to the 5S RNA in the ribosome where it forms part of the central protuberance. The chain is Large ribosomal subunit protein bL25B from Symbiobacterium thermophilum (strain DSM 24528 / JCM 14929 / IAM 14863 / T).